A 270-amino-acid chain; its full sequence is Palmitoyltransferase ZDHHC12-A (270 aa).

The Cytoplasmic portion of the chain corresponds to 1-8 (MNKSLFKS). The helical transmembrane segment at 9 to 29 (GCLVRTAHVILTWIITLILFL) threads the bilayer. The Lumenal portion of the chain corresponds to 30–45 (HNTDLRRCQERGDLLQ). Residues 46–66 (PLVFSSVLLLSVLLYFTVSLM) traverse the membrane as a helical segment. The Cytoplasmic segment spans residues 67-145 (DPGFVLSDSQ…DNCVGELNHR (79 aa)). The DHHC domain occupies 102 to 152 (RRCGYCFLLQPMRARHCKWCKRCVRRFDHHCPWIDNCVGELNHRWFLLYLC). Residue C132 is the S-palmitoyl cysteine intermediate of the active site. A helical membrane pass occupies residues 146–166 (WFLLYLCVQFTAVCWGLQSAW). Residues 167–182 (SGFISAPSWQQWFTQN) are Lumenal-facing. A helical membrane pass occupies residues 183 to 203 (VFLLVAFAVTAVFSVVLLLLL). At 204–270 (CIHAYLASVN…MYIRHNNASV (67 aa)) the chain is on the cytoplasmic side.

It belongs to the DHHC palmitoyltransferase family.

The protein resides in the golgi apparatus membrane. It is found in the endoplasmic reticulum membrane. The enzyme catalyses L-cysteinyl-[protein] + hexadecanoyl-CoA = S-hexadecanoyl-L-cysteinyl-[protein] + CoA. Palmitoyltransferase that catalyzes the addition of palmitate onto various protein substrates. Has a palmitoyltransferase activity toward gephyrin/GPHN, regulating its clustering at synapses and its function in gamma-aminobutyric acid receptor clustering. Acts as an inhibitor of the NLRP3 inflammasome by mediating palmitoylation of NLRP3, thereby promoting NLRP3 degradation by the chaperone-mediated autophagy (CMA) process. This is Palmitoyltransferase ZDHHC12-A from Danio rerio (Zebrafish).